Reading from the N-terminus, the 397-residue chain is Anhydro-N-acetylmuramic acid kinase (397 aa).

21–28 (GTSLDGVD) provides a ligand contact to ATP. Over residues 373–384 (TPTNLPSVTGAS) the composition is skewed to polar residues. The tract at residues 373 to 397 (TPTNLPSVTGASARTPLGSLSVPGP) is disordered.

The protein belongs to the anhydro-N-acetylmuramic acid kinase family.

The enzyme catalyses 1,6-anhydro-N-acetyl-beta-muramate + ATP + H2O = N-acetyl-D-muramate 6-phosphate + ADP + H(+). Its pathway is amino-sugar metabolism; 1,6-anhydro-N-acetylmuramate degradation. The protein operates within cell wall biogenesis; peptidoglycan recycling. In terms of biological role, catalyzes the specific phosphorylation of 1,6-anhydro-N-acetylmuramic acid (anhMurNAc) with the simultaneous cleavage of the 1,6-anhydro ring, generating MurNAc-6-P. Is required for the utilization of anhMurNAc either imported from the medium or derived from its own cell wall murein, and thus plays a role in cell wall recycling. In Salinibacter ruber (strain DSM 13855 / M31), this protein is Anhydro-N-acetylmuramic acid kinase.